A 370-amino-acid polypeptide reads, in one-letter code: uncharacterized protein (370 aa).

The a divalent metal cation site is built by aspartate 152, histidine 154, aspartate 184, asparagine 215, histidine 306, and histidine 308.

The protein belongs to the metallophosphoesterase superfamily. Requires a divalent metal cation as cofactor.

This is an uncharacterized protein from Helicobacter pylori (strain J99 / ATCC 700824) (Campylobacter pylori J99).